The primary structure comprises 245 residues: 1-(5-phosphoribosyl)-5-[(5-phosphoribosylamino)methylideneamino] imidazole-4-carboxamide isomerase (245 aa).

D7 serves as the catalytic Proton acceptor. Residue D129 is the Proton donor of the active site.

This sequence belongs to the HisA/HisF family.

The protein resides in the cytoplasm. The enzyme catalyses 1-(5-phospho-beta-D-ribosyl)-5-[(5-phospho-beta-D-ribosylamino)methylideneamino]imidazole-4-carboxamide = 5-[(5-phospho-1-deoxy-D-ribulos-1-ylimino)methylamino]-1-(5-phospho-beta-D-ribosyl)imidazole-4-carboxamide. It participates in amino-acid biosynthesis; L-histidine biosynthesis; L-histidine from 5-phospho-alpha-D-ribose 1-diphosphate: step 4/9. The chain is 1-(5-phosphoribosyl)-5-[(5-phosphoribosylamino)methylideneamino] imidazole-4-carboxamide isomerase from Escherichia fergusonii (strain ATCC 35469 / DSM 13698 / CCUG 18766 / IAM 14443 / JCM 21226 / LMG 7866 / NBRC 102419 / NCTC 12128 / CDC 0568-73).